A 38-amino-acid chain; its full sequence is Toxin Bot33 (38 aa).

3 cysteine pairs are disulfide-bonded: Cys8-Cys28, Cys14-Cys33, and Cys18-Cys35.

This sequence belongs to the short scorpion toxin superfamily. Potassium channel inhibitor family. As to expression, expressed by the venom gland.

The protein localises to the secreted. A probable toxin that has no activity on the tested mammalian voltage-gated potassium channels (when tested at 1 uM) and is not toxic to mice. It resembles alpha toxins that block voltage-gated potassium channels. The chain is Toxin Bot33 from Buthus occitanus tunetanus (Common European scorpion).